The primary structure comprises 631 residues: Acurin A biosynthesis cluster transcription regulator (631 aa).

Polar residues predominate over residues 1–11; it reads MSPNMSLTASH. Positions 1 to 28 are disordered; the sequence is MSPNMSLTASHPQQPQPTPQSKAQLTRQ. Positions 30 to 62 form a DNA-binding region, zn(2)-C6 fungal-type; sequence CNRCHASKLKCLRPPGVTTSKSCIRCIKADTEC. Disordered stretches follow at residues 64 to 141, 489 to 522, and 536 to 573; these read YDPP…PDNR, CSSSASTSSTASTTSCSTRAPPSSATGGAHHPAT, and HSSSDHLFSQPEGRGYAPYNHAFHPPPPSRHTHNYPTP. Residues 88–99 are compositionally biased toward basic and acidic residues; it reads IEAREPEVTDPR. The span at 119–128 shows a compositional bias: polar residues; that stretch reads NGSLAPSSAA.

The protein resides in the nucleus. Its function is as follows. Transcription factor that positively regulates the expression of the cluster that mediates the biosynthesis of acurin A, a highly reduced polyketide coupled to a serine via a peptide bond. In Aspergillus aculeatus (strain ATCC 16872 / CBS 172.66 / WB 5094), this protein is Acurin A biosynthesis cluster transcription regulator.